The primary structure comprises 457 residues: ATP synthase subunit beta (457 aa).

147–154 (GGAGVGKT) lines the ATP pocket.

The protein belongs to the ATPase alpha/beta chains family. F-type ATPases have 2 components, CF(1) - the catalytic core - and CF(0) - the membrane proton channel. CF(1) has five subunits: alpha(3), beta(3), gamma(1), delta(1), epsilon(1). CF(0) has three main subunits: a(1), b(2) and c(9-12). The alpha and beta chains form an alternating ring which encloses part of the gamma chain. CF(1) is attached to CF(0) by a central stalk formed by the gamma and epsilon chains, while a peripheral stalk is formed by the delta and b chains.

It localises to the cell inner membrane. The catalysed reaction is ATP + H2O + 4 H(+)(in) = ADP + phosphate + 5 H(+)(out). Produces ATP from ADP in the presence of a proton gradient across the membrane. The catalytic sites are hosted primarily by the beta subunits. The sequence is that of ATP synthase subunit beta from Actinobacillus pleuropneumoniae serotype 5b (strain L20).